The following is a 284-amino-acid chain: 2-dehydro-3-deoxyphosphooctonate aldolase (284 aa).

This sequence belongs to the KdsA family.

The protein localises to the cytoplasm. It catalyses the reaction D-arabinose 5-phosphate + phosphoenolpyruvate + H2O = 3-deoxy-alpha-D-manno-2-octulosonate-8-phosphate + phosphate. The protein operates within carbohydrate biosynthesis; 3-deoxy-D-manno-octulosonate biosynthesis; 3-deoxy-D-manno-octulosonate from D-ribulose 5-phosphate: step 2/3. It participates in bacterial outer membrane biogenesis; lipopolysaccharide biosynthesis. This chain is 2-dehydro-3-deoxyphosphooctonate aldolase, found in Burkholderia vietnamiensis (strain G4 / LMG 22486) (Burkholderia cepacia (strain R1808)).